Here is a 408-residue protein sequence, read N- to C-terminus: uncharacterized protein (408 aa).

Disordered stretches follow at residues 184-206 (DENNNNSNNNNNNNSNNNSSILF) and 254-317 (NNKT…SSDS). A compositionally biased stretch (low complexity) spans 187-206 (NNNSNNNNNNNSNNNSSILF).

This is an uncharacterized protein from Dictyostelium discoideum (Social amoeba).